Reading from the N-terminus, the 134-residue chain is MPTTQQLLRKGRTTLQKKSKVPALKGSPFRRGVCTVVKTTTPKKPNSALRKIARVRLSSGFEVTAYIPGEGHNLQEHSVVLIRGGRVKDLPGVRYHIVRGSLDTQGVKDRNKSRSKYGTKKPKAGAAAAGAKKK.

The segment at 1 to 26 is disordered; that stretch reads MPTTQQLLRKGRTTLQKKSKVPALKG. Residues 9–20 show a composition bias toward basic residues; sequence RKGRTTLQKKSK. Aspartate 89 is modified (3-methylthioaspartic acid). Residues 103 to 134 form a disordered region; that stretch reads DTQGVKDRNKSRSKYGTKKPKAGAAAAGAKKK. Positions 113 to 123 are enriched in basic residues; the sequence is SRSKYGTKKPK. Over residues 124–134 the composition is skewed to low complexity; that stretch reads AGAAAAGAKKK.

It belongs to the universal ribosomal protein uS12 family. In terms of assembly, part of the 30S ribosomal subunit. Contacts proteins S8 and S17. May interact with IF1 in the 30S initiation complex.

In terms of biological role, with S4 and S5 plays an important role in translational accuracy. Interacts with and stabilizes bases of the 16S rRNA that are involved in tRNA selection in the A site and with the mRNA backbone. Located at the interface of the 30S and 50S subunits, it traverses the body of the 30S subunit contacting proteins on the other side and probably holding the rRNA structure together. The combined cluster of proteins S8, S12 and S17 appears to hold together the shoulder and platform of the 30S subunit. The chain is Small ribosomal subunit protein uS12 from Deinococcus geothermalis (strain DSM 11300 / CIP 105573 / AG-3a).